A 606-amino-acid chain; its full sequence is Electron transfer flavoprotein-ubiquinone oxidoreductase, mitochondrial (606 aa).

59–73 (VVIVGAGPSGLSTAI) lines the FAD pocket. A helical membrane pass occupies residues 448–468 (PSLHWGTIPGLIYGALEMYIF). Residues cysteine 551, cysteine 575, cysteine 578, and cysteine 581 each contribute to the [4Fe-4S] cluster site.

Belongs to the ETF-QO/FixC family. In terms of assembly, monomer. [4Fe-4S] cluster serves as cofactor. FAD is required as a cofactor.

The protein localises to the mitochondrion inner membrane. It catalyses the reaction a ubiquinone + reduced [electron-transfer flavoprotein] = a ubiquinol + oxidized [electron-transfer flavoprotein] + H(+). In terms of biological role, accepts electrons from ETF and reduces ubiquinone. This is Electron transfer flavoprotein-ubiquinone oxidoreductase, mitochondrial (etfdh) from Dictyostelium discoideum (Social amoeba).